The primary structure comprises 62 residues: MLQVVQEGNPAPFIINTVKRGRRDRERQRTPWAPHPLGFQGRRYIYESPNHRGKDSSFLAQK.

This is an uncharacterized protein from Homo sapiens (Human).